A 524-amino-acid chain; its full sequence is Glucose-6-phosphate isomerase (524 aa).

Catalysis depends on Glu-346, which acts as the Proton donor. Catalysis depends on residues His-377 and Lys-492.

This sequence belongs to the GPI family.

The protein resides in the cytoplasm. The catalysed reaction is alpha-D-glucose 6-phosphate = beta-D-fructose 6-phosphate. The protein operates within carbohydrate biosynthesis; gluconeogenesis. It functions in the pathway carbohydrate degradation; glycolysis; D-glyceraldehyde 3-phosphate and glycerone phosphate from D-glucose: step 2/4. Functionally, catalyzes the reversible isomerization of glucose-6-phosphate to fructose-6-phosphate. The polypeptide is Glucose-6-phosphate isomerase (Chlamydia muridarum (strain MoPn / Nigg)).